The chain runs to 257 residues: Thiazole synthase (257 aa).

Lys-100 acts as the Schiff-base intermediate with DXP in catalysis. 1-deoxy-D-xylulose 5-phosphate is bound by residues Gly-161, 187-188 (AG), and 209-210 (NT).

Belongs to the ThiG family. Homotetramer. Forms heterodimers with either ThiH or ThiS.

The protein localises to the cytoplasm. The enzyme catalyses [ThiS sulfur-carrier protein]-C-terminal-Gly-aminoethanethioate + 2-iminoacetate + 1-deoxy-D-xylulose 5-phosphate = [ThiS sulfur-carrier protein]-C-terminal Gly-Gly + 2-[(2R,5Z)-2-carboxy-4-methylthiazol-5(2H)-ylidene]ethyl phosphate + 2 H2O + H(+). The protein operates within cofactor biosynthesis; thiamine diphosphate biosynthesis. Catalyzes the rearrangement of 1-deoxy-D-xylulose 5-phosphate (DXP) to produce the thiazole phosphate moiety of thiamine. Sulfur is provided by the thiocarboxylate moiety of the carrier protein ThiS. In vitro, sulfur can be provided by H(2)S. The sequence is that of Thiazole synthase from Zymomonas mobilis subsp. mobilis (strain ATCC 31821 / ZM4 / CP4).